A 409-amino-acid chain; its full sequence is Inactive serine protease 35 (409 aa).

The signal sequence occupies residues 1-20 (MENTLLWLVILIPGWALSDG). Asparagine 90 is a glycosylation site (N-linked (GlcNAc...) asparagine). Positions 124–404 (VYGTDSRFSI…ICLWIHGNAA (281 aa)) constitute a Peptidase S1 domain. A disulfide bridge connects residues cysteine 154 and cysteine 170. Over residues 188 to 207 (VLKMRNKGGRKKRRGSKRSR) the composition is skewed to basic residues. The interval 188-247 (VLKMRNKGGRKKRRGSKRSRREAESAGQSQAHLRESTTQRPGKKSRRGPRVTQGRPSFQW) is disordered.

Belongs to the peptidase S1 family. In terms of tissue distribution, in ovary, it localizes to the theca cells of pre-antral follicles, the theca and granulosa cells of pre-ovulatory and ovulatory follicles, as well as to the developing corpus luteum.

The protein resides in the secreted. This Mus musculus (Mouse) protein is Inactive serine protease 35 (Prss35).